The sequence spans 670 residues: Serine/threonine-rich protein adg2 (670 aa).

Residues 1–19 (MRRLTISGLLISLAKLCAG) form the signal peptide. Asparagine 77, asparagine 159, asparagine 204, asparagine 224, asparagine 274, asparagine 297, asparagine 327, asparagine 351, asparagine 370, asparagine 381, asparagine 405, asparagine 424, asparagine 435, asparagine 459, asparagine 478, asparagine 489, and asparagine 513 each carry an N-linked (GlcNAc...) asparagine glycan. The tract at residues 526 to 651 (GSVSSFSSSP…MSLPPSAGSS (126 aa)) is disordered.

The protein resides in the secreted. It localises to the endoplasmic reticulum. This Schizosaccharomyces pombe (strain 972 / ATCC 24843) (Fission yeast) protein is Serine/threonine-rich protein adg2 (adg2).